The sequence spans 338 residues: NAC domain-containing protein 46 (338 aa).

The NAC domain occupies 20–171 (LPPGFRFHPT…EWVVCRVFHK (152 aa)). The DNA-binding element occupies 118-177 (VGMKKTLVFYTGRAPKGEKTNWVMHEYRLDGKYSYHNLPKTARDEWVVCRVFHKNAPSTT).

Interacts with RCD1.

It is found in the nucleus. Functionally, transcriptional activator that acts as a positive regulator of leaf senescence. Activates NYC1, SGR1, SGR2 and PAO, which are genes involved in chlorophyll catabolic processes. Activates senescence-associated genes, such as RNS1, SAG12 and SAG13. The sequence is that of NAC domain-containing protein 46 from Arabidopsis thaliana (Mouse-ear cress).